Consider the following 328-residue polypeptide: Tetraacyldisaccharide 4'-kinase (328 aa).

Position 55 to 62 (55 to 62) interacts with ATP; sequence TAGGNGKT.

Belongs to the LpxK family.

It catalyses the reaction a lipid A disaccharide + ATP = a lipid IVA + ADP + H(+). The protein operates within glycolipid biosynthesis; lipid IV(A) biosynthesis; lipid IV(A) from (3R)-3-hydroxytetradecanoyl-[acyl-carrier-protein] and UDP-N-acetyl-alpha-D-glucosamine: step 6/6. Its function is as follows. Transfers the gamma-phosphate of ATP to the 4'-position of a tetraacyldisaccharide 1-phosphate intermediate (termed DS-1-P) to form tetraacyldisaccharide 1,4'-bis-phosphate (lipid IVA). This chain is Tetraacyldisaccharide 4'-kinase, found in Shigella boydii serotype 18 (strain CDC 3083-94 / BS512).